Here is a 109-residue protein sequence, read N- to C-terminus: Membrane-bound lysozyme inhibitor of C-type lysozyme (109 aa).

The first 17 residues, 1-17, serve as a signal peptide directing secretion; it reads MTMKKLLIIILPVLLSG. Cysteine 18 carries N-palmitoyl cysteine lipidation. A lipid anchor (S-diacylglycerol cysteine) is attached at cysteine 18. Residues cysteine 37 and cysteine 102 are joined by a disulfide bond.

Belongs to the MliC family. Type 1 subfamily. In terms of assembly, monomer.

It is found in the cell outer membrane. In terms of biological role, specifically inhibits C-type lysozymes. In Escherichia coli (strain K12), this protein is Membrane-bound lysozyme inhibitor of C-type lysozyme.